The following is a 344-amino-acid chain: Protein Tob2 (344 aa).

2 disordered regions span residues 144-169 (GSQD…FIPR) and 191-225 (MKKG…SPTN). The span at 145-164 (SQDSSLSNSPSPSFGQSPSP) shows a compositional bias: low complexity. Gly residues predominate over residues 194–210 (GGGAASGGGVASSGAGG). The segment covering 211 to 225 (QQPPQQPRMARSPTN) has biased composition (low complexity). S254 bears the Phosphoserine mark.

This sequence belongs to the BTG family. Associates with CAF1. In terms of tissue distribution, ubiquitous.

It localises to the cytoplasm. Its function is as follows. Anti-proliferative protein inhibits cell cycle progression from the G0/G1 to S phases. This is Protein Tob2 (TOB2) from Homo sapiens (Human).